Here is a 508-residue protein sequence, read N- to C-terminus: Photosystem II CP47 reaction center protein (508 aa).

6 helical membrane passes run 21–36 (SVHI…WAGS), 101–115 (IVFS…IWHW), 140–156 (GIHL…FGAF), 203–218 (IAAG…FHLS), 237–252 (VLSS…AFVV), and 457–472 (SFAL…HGAR).

The protein belongs to the PsbB/PsbC family. PsbB subfamily. In terms of assembly, PSII is composed of 1 copy each of membrane proteins PsbA, PsbB, PsbC, PsbD, PsbE, PsbF, PsbH, PsbI, PsbJ, PsbK, PsbL, PsbM, PsbT, PsbX, PsbY, PsbZ, Psb30/Ycf12, at least 3 peripheral proteins of the oxygen-evolving complex and a large number of cofactors. It forms dimeric complexes. The cofactor is Binds multiple chlorophylls. PSII binds additional chlorophylls, carotenoids and specific lipids..

Its subcellular location is the plastid. It localises to the chloroplast thylakoid membrane. Functionally, one of the components of the core complex of photosystem II (PSII). It binds chlorophyll and helps catalyze the primary light-induced photochemical processes of PSII. PSII is a light-driven water:plastoquinone oxidoreductase, using light energy to abstract electrons from H(2)O, generating O(2) and a proton gradient subsequently used for ATP formation. In Aethionema cordifolium (Lebanon stonecress), this protein is Photosystem II CP47 reaction center protein.